The chain runs to 912 residues: Non-lysosomal glucosylceramidase (912 aa).

Residues 886-912 form a disordered region; sequence HKKNSSRPAVTQGTAPSQPECGPKRSL. The segment covering 891–902 has biased composition (polar residues); sequence SRPAVTQGTAPS.

Belongs to the non-lysosomal glucosylceramidase family.

It is found in the endoplasmic reticulum membrane. Its subcellular location is the golgi apparatus membrane. The catalysed reaction is a beta-D-glucosyl-(1&lt;-&gt;1')-N-acylsphing-4-enine + H2O = an N-acylsphing-4-enine + D-glucose. It carries out the reaction a beta-D-galactosyl-(1&lt;-&gt;1')-N-acylsphing-4-enine + H2O = an N-acylsphing-4-enine + D-galactose. The enzyme catalyses beta-D-glucosyl-(1-&gt;3)-O-lithocholate + H2O = lithocholate + D-glucose. It catalyses the reaction beta-D-glucosyl-(1-&gt;3)-O-chenodeoxycholate + H2O = chenodeoxycholate + D-glucose. The catalysed reaction is a di-trans,poly-cis-dolichyl beta-D-glucosyl phosphate + chenodeoxycholate = beta-D-glucosyl-(1-&gt;3)-O-chenodeoxycholate + a di-trans,poly-cis-dolichyl phosphate + H(+). It carries out the reaction octyl beta-D-glucose + chenodeoxycholate = beta-D-glucosyl-(1-&gt;3)-O-chenodeoxycholate + octan-1-ol. The enzyme catalyses cholesteryl 3-beta-D-glucoside + H2O = cholesterol + D-glucose. It catalyses the reaction a beta-D-glucosyl-(1&lt;-&gt;1')-N-acylsphing-4-enine + cholesterol = cholesteryl 3-beta-D-glucoside + an N-acylsphing-4-enine. The catalysed reaction is beta-D-glucosyl-N-(9Z-octadecenoyl)-sphing-4E-enine + cholesterol = N-(9Z-octadecenoyl)-sphing-4-enine + cholesteryl 3-beta-D-glucoside. It carries out the reaction a beta-D-galactosyl-(1&lt;-&gt;1')-N-acylsphing-4-enine + cholesterol = cholesteryl 3-beta-D-galactoside + an N-acylsphing-4-enine. The enzyme catalyses 1-(beta-D-galactosyl)-N-dodecanoylsphing-4-enine + cholesterol = cholesteryl 3-beta-D-galactoside + N-dodecanoylsphing-4-enine. The protein operates within lipid metabolism; sphingolipid metabolism. It participates in steroid metabolism; cholesterol metabolism. Enzymatic activity is dependent on membrane association and requires the presence of lipids. Its function is as follows. Non-lysosomal glucosylceramidase that catalyzes the hydrolysis of glucosylceramides/GlcCers (such as beta-D-glucosyl-(1&lt;-&gt;1')-N-acylsphing-4-enine) to free glucose and ceramides (such as N-acylsphing-4-enine). GlcCers are membrane glycosphingolipids that have a wide intracellular distribution. They are the main precursors of more complex glycosphingolipids that play a role in cellular growth, differentiation, adhesion, signaling, cytoskeletal dynamics and membrane properties. Involved in the transglucosylation of cholesterol, transfers glucose from GlcCer to cholesterol, thereby modifying its water solubility and biological properties. Under specific conditions, may catalyze the reverse reaction, transferring glucose from cholesteryl-3-beta-D-glucoside to ceramide (such as N-acylsphing-4-enine). May play a role in the metabolism of bile acids. Able to hydrolyze bile acid 3-O-glucosides as well as to produce bile acid-glucose conjugates thanks to a bile acid glucosyl transferase activity. Catalyzes the hydrolysis of galactosylceramides/GalCers (such as beta-D-galactosyl-(1&lt;-&gt;1')-N-acylsphing-4-enine), as well as the galactosyl transfer between GalCers and cholesterol in vitro with lower activity compared with their activity against GlcCers. In Rattus norvegicus (Rat), this protein is Non-lysosomal glucosylceramidase.